Here is a 378-residue protein sequence, read N- to C-terminus: MTKPAILALADGSIFRGEAIGADGQTVGEVVFNTAMTGYQEILTDPSYAQQIVTLTYPHIGNTGTTPEDAESSRVWSAGLVIRDLPLLASNWRNTQSLPEYLKANNVVAIAGIDTRRLTRILREKGAQNGCILAGDNISEEAAIAAARGFPGLKGMDLAKVVSTKERYEWRSSVWELKTDSHPTIDAADLPYHVVAFDYGVKLNILRMLVARGCRVTVVPAQTPASEVLALNPDGVFLSNGPGDPEPCDYAIQAIKEILETEIPVFGICLGHQLLALASGAKTVKMGHGHHGANHPVQDLDTGVVMITSQNHGFAVDEATLPGNVRAIHKSLFDGTLQGIERTDKSAFSFQGHPEASPGPTDVAPLFDRFTDAMAKRR.

The segment at 1-189 is CPSase; it reads MTKPAILALA…DSHPTIDAAD (189 aa). Residues Ser-47, Gly-241, and Gly-243 each contribute to the L-glutamine site. The Glutamine amidotransferase type-1 domain maps to 193 to 378; that stretch reads HVVAFDYGVK…RFTDAMAKRR (186 aa). Cys-269 (nucleophile) is an active-site residue. 5 residues coordinate L-glutamine: Leu-270, Gln-273, Asn-311, Gly-313, and Phe-314. Catalysis depends on residues His-353 and Glu-355.

It belongs to the CarA family. As to quaternary structure, composed of two chains; the small (or glutamine) chain promotes the hydrolysis of glutamine to ammonia, which is used by the large (or ammonia) chain to synthesize carbamoyl phosphate. Tetramer of heterodimers (alpha,beta)4.

The catalysed reaction is hydrogencarbonate + L-glutamine + 2 ATP + H2O = carbamoyl phosphate + L-glutamate + 2 ADP + phosphate + 2 H(+). It carries out the reaction L-glutamine + H2O = L-glutamate + NH4(+). Its pathway is amino-acid biosynthesis; L-arginine biosynthesis; carbamoyl phosphate from bicarbonate: step 1/1. The protein operates within pyrimidine metabolism; UMP biosynthesis via de novo pathway; (S)-dihydroorotate from bicarbonate: step 1/3. Functionally, small subunit of the glutamine-dependent carbamoyl phosphate synthetase (CPSase). CPSase catalyzes the formation of carbamoyl phosphate from the ammonia moiety of glutamine, carbonate, and phosphate donated by ATP, constituting the first step of 2 biosynthetic pathways, one leading to arginine and/or urea and the other to pyrimidine nucleotides. The small subunit (glutamine amidotransferase) binds and cleaves glutamine to supply the large subunit with the substrate ammonia. This Pseudomonas putida (strain ATCC 47054 / DSM 6125 / CFBP 8728 / NCIMB 11950 / KT2440) protein is Carbamoyl phosphate synthase small chain.